A 362-amino-acid polypeptide reads, in one-letter code: Putative F-box protein At3g25750 (362 aa).

The 49-residue stretch at 4–52 (TEWSDLPEELLDLIANRYSSNIDVLRIRSTCKSWRSAVAMSKERLQFRF) folds into the F-box domain.

This chain is Putative F-box protein At3g25750, found in Arabidopsis thaliana (Mouse-ear cress).